Here is a 293-residue protein sequence, read N- to C-terminus: Small ribosomal subunit biogenesis GTPase RsgA (293 aa).

The 161-residue stretch at 63-223 folds into the CP-type G domain; sequence KNQLNRPPIA…VADTPGFSSL (161 aa). Residues 112 to 115 and 166 to 174 each bind GTP; these read SKTD and GQSGVGKSS. Zn(2+)-binding residues include cysteine 247, cysteine 252, histidine 254, and cysteine 260.

Belongs to the TRAFAC class YlqF/YawG GTPase family. RsgA subfamily. As to quaternary structure, monomer. Associates with 30S ribosomal subunit, binds 16S rRNA. Requires Zn(2+) as cofactor.

The protein localises to the cytoplasm. Its function is as follows. One of several proteins that assist in the late maturation steps of the functional core of the 30S ribosomal subunit. Helps release RbfA from mature subunits. May play a role in the assembly of ribosomal proteins into the subunit. Circularly permuted GTPase that catalyzes slow GTP hydrolysis, GTPase activity is stimulated by the 30S ribosomal subunit. In Shouchella clausii (strain KSM-K16) (Alkalihalobacillus clausii), this protein is Small ribosomal subunit biogenesis GTPase RsgA.